The chain runs to 429 residues: Glutamate-1-semialdehyde 2,1-aminomutase (429 aa).

N6-(pyridoxal phosphate)lysine is present on Lys267.

This sequence belongs to the class-III pyridoxal-phosphate-dependent aminotransferase family. HemL subfamily. Homodimer. The cofactor is pyridoxal 5'-phosphate.

It is found in the cytoplasm. The catalysed reaction is (S)-4-amino-5-oxopentanoate = 5-aminolevulinate. It functions in the pathway porphyrin-containing compound metabolism; protoporphyrin-IX biosynthesis; 5-aminolevulinate from L-glutamyl-tRNA(Glu): step 2/2. This Stenotrophomonas maltophilia (strain K279a) protein is Glutamate-1-semialdehyde 2,1-aminomutase.